A 525-amino-acid polypeptide reads, in one-letter code: Probable pectinesterase/pectinesterase inhibitor 44 (525 aa).

Residues 1–19 (MSCLKYFLILLMLGLCVSS) form the signal peptide. The pectinesterase inhibitor 44 stretch occupies residues 30–153 (VPASEFVSSI…YSMLRELLPL (124 aa)). N98 carries an N-linked (GlcNAc...) asparagine glycan. Positions 157–192 (EQKPKAVSKPGPIAKGPKAPPGRKLRDTDEDESLQF) are disordered. The tract at residues 212–509 (DVSVALDGTG…FTVSQFIKGN (298 aa)) is pectinesterase 44. 2 N-linked (GlcNAc...) asparagine glycosylation sites follow: N222 and N278. Substrate is bound by residues T287 and Q317. D340 (proton donor; for pectinesterase activity) is an active-site residue. A disulfide bridge links C354 with C374. The active-site Nucleophile; for pectinesterase activity is D361. 2 N-linked (GlcNAc...) asparagine glycosylation sites follow: N409 and N421. 2 residues coordinate substrate: R429 and W431. N-linked (GlcNAc...) asparagine glycans are attached at residues N443, N492, and N499.

The protein in the N-terminal section; belongs to the PMEI family. It in the C-terminal section; belongs to the pectinesterase family. As to expression, expressed in siliques.

It localises to the secreted. The protein resides in the cell wall. It catalyses the reaction [(1-&gt;4)-alpha-D-galacturonosyl methyl ester](n) + n H2O = [(1-&gt;4)-alpha-D-galacturonosyl](n) + n methanol + n H(+). The protein operates within glycan metabolism; pectin degradation; 2-dehydro-3-deoxy-D-gluconate from pectin: step 1/5. Acts in the modification of cell walls via demethylesterification of cell wall pectin. In Arabidopsis thaliana (Mouse-ear cress), this protein is Probable pectinesterase/pectinesterase inhibitor 44 (PME44).